The primary structure comprises 599 residues: MSLLKIYWRAMQYLAVERTATITMCVASVLVALVTLAEPVLFGRVIQSISDKGDIFSPLLMWAALGGFNIMAAVFVARGADRLAHRRRLGVMIDSYERLITMPLAWHQKRGTSNALHTLIRATDSLFTLWLEFMRQHLTTVVALATLIPVAMTMDMRMSLVLIVLGVIYVMIGQLVMRKTKDGQAAVEKHHHKLFEHVSDTISNVSVVQSYNRIASETQALRDYAKNLENAQFPVLNWWALASGLNRMASTFSMVVVLVLGAYFVTKGQMRVGDVIAFIGFAQLMIGRLDQISAFINQTVTARAKLEEFFQMEDATADRQEPENVADLNDVKGDIVFDNVTYEFPNSGQGVYDVSFEVKPGQTVAIVGPTGAGKTTLINLLQRVFDPAAGRIMIDGTDTRTVSRRSLRHAIATVFQDAGLFNRSVEDNIRVGRANATHEEVHAAAKAAAAHDFILAKSEGYDTFVGERGSQLSGGERQRLAIARAILKDSPILVLDEATSALDVETEEKLKQAVDELSHNRTTFIIAHRLSTVRSADLVLFMDKGHLVESGSFNELAERGGRFSDLLRAGGLKLEDKQPKQPVVEGSNVMPFPVKGAVA.

The ABC transmembrane type-1 domain occupies 21-301 (TITMCVASVL…ISAFINQTVT (281 aa)). Helical transmembrane passes span 22–42 (ITMC…PVLF), 55–75 (IFSP…AAVF), 156–176 (MRMS…GQLV), 248–268 (MAST…VTKG), and 276–296 (IAFI…SAFI). In terms of domain architecture, ABC transporter spans 335–569 (IVFDNVTYEF…GGRFSDLLRA (235 aa)). Residue 368–375 (GPTGAGKT) participates in ATP binding.

The protein belongs to the ABC transporter superfamily. Beta-(1--&gt;2)glucan exporter (TC 3.A.1.108.1) family. Homodimer.

The protein localises to the cell inner membrane. It catalyses the reaction [(1-&gt;2)-beta-D-glucosyl](n)(in) + ATP + H2O = [(1-&gt;2)-beta-D-glucosyl](n)(out) + ADP + phosphate + H(+). Its function is as follows. Involved in beta-(1--&gt;2)glucan export. Transmembrane domains (TMD) form a pore in the inner membrane and the ATP-binding domain (NBD) is responsible for energy generation. The sequence is that of Beta-(1--&gt;2)glucan export ATP-binding/permease protein NdvA from Brucella melitensis biotype 1 (strain ATCC 23456 / CCUG 17765 / NCTC 10094 / 16M).